Here is an 855-residue protein sequence, read N- to C-terminus: MKTSSFESASSSGGSGGGGGGGGGEGSGSFNLRNLSKLILPPLGVPAGGHAQSGHAGPNDRRVISPLDSRYRCWDTFMVVLVAYSAWVYPFEVAFMNASPKGGLEVADIVVDLFFAVDIVLTFFVAYIDSRTQLLVRDRRRIATRYLSTFFIMDVASTIPFQGLAYIVTGEVRESPAFSLLGILRLWRLRKVKQFFTRLEKDIRFNYFWIRCARLIAVTLFLVHCAGCLYYLIADRYPHREKTWIGAVIPDFQEASLWIRYTSSVYWSITTMTTVGYGDMHAQNTVEMIFNIFYMLFNLGLTAYLIGNMTNLVVEGTRRTMEFRNSIRAASNFVGRNHLPPRLKQQILAYMCLKFRAESLNQQQLMDQLPKSICKGICEYLFLPVVKDVYLFKGVSREVLLLMVTKMKPEYIPPKEDVIVQNEAPDDVYIVVSGEVEVIYSDGEAEERVVATLGTRGVFGEVSALSDRPQSFTLRTRTLCQLLRLRQAALKEAMQSKPEDSVVIIKNFLKHQIEMHDMKVEDLLGEDAAGEYDHGNIPCNLLTVAATGNSSFLEDLLKVGMDPDVGDSKGRTALHIAASKGYEDCVLVLLKQACNVNIKDAQGNTALWNAIAARHHKIFNILYHFARVSSPHHAAGDLLCLAARRGDLDTLRELLKHGLAVDSEDRDGATALRVALAEGHADVARLLVLNGASVDRAASHNEQQAAAAVSVDELRELMKTRELAHPVTIVVDSPSPAAAAVIREVGSSGDSRNGRRQSARSDGAHWPRVSIYRGHPFVRNRSSEAGKLINLPGTMEEFRIIIEEKLKVDARKTLIMNDEGAEIDSIDVIRDNDKLFIVTEEHMTAVASMDSVSGS.

The segment covering 1–12 (MKTSSFESASSS) has biased composition (low complexity). Residues 1 to 24 (MKTSSFESASSSGGSGGGGGGGGG) form a disordered region. The Cytoplasmic segment spans residues 1 to 75 (MKTSSFESAS…PLDSRYRCWD (75 aa)). Residues 13–24 (GGSGGGGGGGGG) show a composition bias toward gly residues. A helical transmembrane segment spans residues 76–96 (TFMVVLVAYSAWVYPFEVAFM). Topologically, residues 97–105 (NASPKGGLE) are extracellular. A helical membrane pass occupies residues 106-126 (VADIVVDLFFAVDIVLTFFVA). The Cytoplasmic segment spans residues 127-149 (YIDSRTQLLVRDRRRIATRYLST). A helical membrane pass occupies residues 150–170 (FFIMDVASTIPFQGLAYIVTG). Residues 171 to 179 (EVRESPAFS) are Extracellular-facing. Residues 180–200 (LLGILRLWRLRKVKQFFTRLE) traverse the membrane as a helical; Voltage-sensor segment. Topologically, residues 201 to 214 (KDIRFNYFWIRCAR) are cytoplasmic. A helical transmembrane segment spans residues 215–235 (LIAVTLFLVHCAGCLYYLIAD). At 236–262 (RYPHREKTWIGAVIPDFQEASLWIRYT) the chain is on the extracellular side. The pore-forming intramembrane region spans 263–282 (SSVYWSITTMTTVGYGDMHA). At 283–285 (QNT) the chain is on the extracellular side. The chain crosses the membrane as a helical span at residues 286–306 (VEMIFNIFYMLFNLGLTAYLI). The Cytoplasmic portion of the chain corresponds to 307–855 (GNMTNLVVEG…VASMDSVSGS (549 aa)). 391-511 (LFKGVSREVL…VVIIKNFLKH (121 aa)) lines the a nucleoside 3',5'-cyclic phosphate pocket. 5 ANK repeats span residues 536 to 565 (NIPC…DPDV), 569 to 598 (KGRT…NVNI), 602 to 631 (QGNT…VSSP), 634 to 663 (AAGD…AVDS), and 667 to 696 (DGAT…SVDR). Residues 744–765 (EVGSSGDSRNGRRQSARSDGAH) form a disordered region. A KHA domain is found at 768 to 855 (RVSIYRGHPF…VASMDSVSGS (88 aa)).

This sequence belongs to the potassium channel family. Plant (TC 1.A.1.4) subfamily. In terms of assembly, the potassium channel is probably a homo- or heterotetrameric complex of pore-forming subunits.

Its subcellular location is the membrane. Its function is as follows. Probable inward-rectifying potassium channel. Assuming opened or closed conformations in response to the voltage difference across the membrane, the channel is activated by hyperpolarization. The protein is Potassium channel AKT2 of Oryza sativa subsp. japonica (Rice).